We begin with the raw amino-acid sequence, 333 residues long: Fructose-1,6-bisphosphatase class 1 1 (333 aa).

Mg(2+) is bound by residues E81, D100, L102, and D103. Substrate contacts are provided by residues 103 to 106 (DGSS) and N191. Residue E263 coordinates Mg(2+).

Belongs to the FBPase class 1 family. As to quaternary structure, homotetramer. It depends on Mg(2+) as a cofactor.

The protein localises to the cytoplasm. It catalyses the reaction beta-D-fructose 1,6-bisphosphate + H2O = beta-D-fructose 6-phosphate + phosphate. It participates in carbohydrate biosynthesis; Calvin cycle. This Cereibacter sphaeroides (strain ATCC 17029 / ATH 2.4.9) (Rhodobacter sphaeroides) protein is Fructose-1,6-bisphosphatase class 1 1.